Consider the following 413-residue polypeptide: F-box/kelch-repeat protein At5g26960 (413 aa).

The region spanning 41–90 (SATIASLPDDLLLECISRVPSSSIPSLAVVCRRWSRLLHSPYFLHLRRRL) is the F-box domain. Kelch repeat units follow at residues 96–141 (SLFA…YGSL), 152–191 (RVYV…VVSG), 192–238 (KIYV…AVDG), 240–295 (FYVI…AAVG), and 367–413 (LLRR…CVEW).

In Arabidopsis thaliana (Mouse-ear cress), this protein is F-box/kelch-repeat protein At5g26960.